A 326-amino-acid chain; its full sequence is Undecaprenyl-diphosphatase (326 aa).

Transmembrane regions (helical) follow at residues 11-31, 42-62, 90-110, 138-158, 165-185, 212-232, 242-262, 272-292, and 304-324; these read AFSL…IAVA, TGVI…LGFI, GVAF…WYFW, LGIG…KLLV, FFRS…LLAL, ALAL…GLFI, FSFL…LKGL, ILPL…AIAW, and IFVW…GMGF.

It belongs to the UppP family.

Its subcellular location is the cell inner membrane. The catalysed reaction is di-trans,octa-cis-undecaprenyl diphosphate + H2O = di-trans,octa-cis-undecaprenyl phosphate + phosphate + H(+). In terms of biological role, catalyzes the dephosphorylation of undecaprenyl diphosphate (UPP). Confers resistance to bacitracin. The polypeptide is Undecaprenyl-diphosphatase (Synechocystis sp. (strain ATCC 27184 / PCC 6803 / Kazusa)).